The sequence spans 488 residues: 3-octaprenyl-4-hydroxybenzoate carboxy-lyase (488 aa).

Position 172 (N172) interacts with Mn(2+). Residues 175-177, 189-191, and 194-195 contribute to the prenylated FMN site; these read IYR, RWL, and RG. E238 contributes to the Mn(2+) binding site. The Proton donor role is filled by D287.

It belongs to the UbiD family. In terms of assembly, homohexamer. Requires prenylated FMN as cofactor. Mn(2+) is required as a cofactor.

It is found in the cell membrane. The enzyme catalyses a 4-hydroxy-3-(all-trans-polyprenyl)benzoate + H(+) = a 2-(all-trans-polyprenyl)phenol + CO2. Its pathway is cofactor biosynthesis; ubiquinone biosynthesis. Functionally, catalyzes the decarboxylation of 3-octaprenyl-4-hydroxy benzoate to 2-octaprenylphenol, an intermediate step in ubiquinone biosynthesis. This is 3-octaprenyl-4-hydroxybenzoate carboxy-lyase from Legionella pneumophila (strain Corby).